Reading from the N-terminus, the 358-residue chain is GTPase Obg (358 aa).

The Obg domain occupies 1 to 159 (MKFLDEAKVY…RWIWLRLKLI (159 aa)). The OBG-type G domain occupies 160-327 (ADAGLVGLPN…VLRALVEVIG (168 aa)). GTP contacts are provided by residues 166–173 (GLPNAGKS), 191–195 (FTTLH), 212–215 (DIPG), 279–282 (NKID), and 308–310 (SGV). Residues Ser173 and Thr193 each coordinate Mg(2+). Positions 335 to 358 (AKGADASAAQAMETPVARAKPWSP) are disordered.

The protein belongs to the TRAFAC class OBG-HflX-like GTPase superfamily. OBG GTPase family. As to quaternary structure, monomer. Mg(2+) is required as a cofactor.

Its subcellular location is the cytoplasm. Its function is as follows. An essential GTPase which binds GTP, GDP and possibly (p)ppGpp with moderate affinity, with high nucleotide exchange rates and a fairly low GTP hydrolysis rate. Plays a role in control of the cell cycle, stress response, ribosome biogenesis and in those bacteria that undergo differentiation, in morphogenesis control. In Nitrobacter winogradskyi (strain ATCC 25391 / DSM 10237 / CIP 104748 / NCIMB 11846 / Nb-255), this protein is GTPase Obg.